The following is a 426-amino-acid chain: Elongation factor 1-alpha (426 aa).

One can recognise a tr-type G domain in the interval 5 to 221 (KPHMNLAVIG…DTFKEPDKPT (217 aa)). Residues 14–21 (GHIDHGKS) form a G1 region. 14-21 (GHIDHGKS) serves as a coordination point for GTP. Serine 21 is a Mg(2+) binding site. Positions 70–74 (GITID) are G2. The G3 stretch occupies residues 91–94 (DCPG). Residues 91–95 (DCPGH) and 146–149 (NKMD) contribute to the GTP site. Residues 146 to 149 (NKMD) are G4. Positions 185-187 (SSF) are G5.

It belongs to the TRAFAC class translation factor GTPase superfamily. Classic translation factor GTPase family. EF-Tu/EF-1A subfamily.

The protein resides in the cytoplasm. It carries out the reaction GTP + H2O = GDP + phosphate + H(+). In terms of biological role, GTP hydrolase that promotes the GTP-dependent binding of aminoacyl-tRNA to the A-site of ribosomes during protein biosynthesis. This is Elongation factor 1-alpha from Methanosphaerula palustris (strain ATCC BAA-1556 / DSM 19958 / E1-9c).